Reading from the N-terminus, the 469-residue chain is UTP--glucose-1-phosphate uridylyltransferase 2 (469 aa).

The residue at position 2 (Ala-2) is an N-acetylalanine. Residues 85–88 (LNGG), Lys-99, Gln-162, and Gly-191 each bind UTP. Residue 87-88 (GG) participates in substrate binding. Substrate contacts are provided by residues His-192 and 220–222 (NSD). Residues Asp-222 and Lys-360 each coordinate UTP.

It belongs to the UDPGP type 1 family. As to expression, expressed in cauline leaves, flowers and siliques.

It is found in the cytoplasm. It carries out the reaction alpha-D-glucose 1-phosphate + UTP + H(+) = UDP-alpha-D-glucose + diphosphate. Functionally, converts glucose 1-phosphate to UDP-glucose, which is the major glycosyl donor for polysaccharides. Acts redundantly with UGP1 and is essential for the synthesis of sucrose, starch and cell wall, and callose deposition. In Arabidopsis thaliana (Mouse-ear cress), this protein is UTP--glucose-1-phosphate uridylyltransferase 2.